A 422-amino-acid polypeptide reads, in one-letter code: Trigger factor (422 aa).

Residues 158–242 form the PPIase FKBP-type domain; the sequence is GDFAVVSLES…VKGLRKKELP (85 aa).

This sequence belongs to the FKBP-type PPIase family. Tig subfamily.

The protein localises to the cytoplasm. The catalysed reaction is [protein]-peptidylproline (omega=180) = [protein]-peptidylproline (omega=0). Functionally, involved in protein export. Acts as a chaperone by maintaining the newly synthesized protein in an open conformation. Functions as a peptidyl-prolyl cis-trans isomerase. This Solibacter usitatus (strain Ellin6076) protein is Trigger factor.